A 464-amino-acid polypeptide reads, in one-letter code: 3-isopropylmalate dehydratase large subunit (464 aa).

[4Fe-4S] cluster-binding residues include Cys-337, Cys-397, and Cys-400.

It belongs to the aconitase/IPM isomerase family. LeuC type 1 subfamily. Heterodimer of LeuC and LeuD. The cofactor is [4Fe-4S] cluster.

The enzyme catalyses (2R,3S)-3-isopropylmalate = (2S)-2-isopropylmalate. Its pathway is amino-acid biosynthesis; L-leucine biosynthesis; L-leucine from 3-methyl-2-oxobutanoate: step 2/4. In terms of biological role, catalyzes the isomerization between 2-isopropylmalate and 3-isopropylmalate, via the formation of 2-isopropylmaleate. The protein is 3-isopropylmalate dehydratase large subunit of Bacillus cereus (strain B4264).